The primary structure comprises 618 residues: MFDLEYQLKNLPDKPGVYLMKNNLGEIIYVGKAKILKNRVRQYFQKSQKHSEKVKAMVKNIEEFEYIITDSEIEALILECNLIKKYRPKYNILLKDDKHYPFIKVTLAEDFPRVISTRKVTKDGSKYFGPYVDGSSVKDIIELIKKTFPIRTCKKNIVEEAKAIRPCLNYQIGLCKAPCAQYIKKSEYRETIDDVIKLLSGKHLDIVENFKLNMEKAAENLEFEKAAMLRDKINIIEKIGEKQKIILNNFDNEDYISLYSDGKDTCFQVFFLRNGKIVGREHFIIEDTFDTNSSTLISNFLKEFYGGTAYIPKTIYVPNIEDEALLEQWLTLKKESKSTIKIPIKGEKKNILVLVEKNAKTTLENFKLKYLQEKALYDNVLKDLKNILRLQEEPIRIEAFDISNIQGFDSVGSMVVFEKGRAKPSDYRRFKINTVKGADDYKSMKEILTRRFQHGLSEIKSIQDRKLEFSSGKFSVFPDLILMDGGKGQINIALEVLNAFNIDIPVCGMVKDNKHRTRGLIYNGEEIIINKYGSVMKFITRVQDEVHRFAISYHRSLRGKNSFHSLLDDIPNIGEKRKKDLLFNFKSIDNIKKATYEELLSIPSMDKKSAECVLEFFK.

In terms of domain architecture, GIY-YIG spans 13 to 92; sequence DKPGVYLMKN…IKKYRPKYNI (80 aa). In terms of domain architecture, UVR spans 204-239; the sequence is LDIVENFKLNMEKAAENLEFEKAAMLRDKINIIEKI.

Belongs to the UvrC family. Interacts with UvrB in an incision complex.

The protein resides in the cytoplasm. Functionally, the UvrABC repair system catalyzes the recognition and processing of DNA lesions. UvrC both incises the 5' and 3' sides of the lesion. The N-terminal half is responsible for the 3' incision and the C-terminal half is responsible for the 5' incision. The chain is UvrABC system protein C from Clostridium botulinum (strain ATCC 19397 / Type A).